The chain runs to 782 residues: E3 UFM1-protein ligase 1 homolog (782 aa).

Positions Asn-404 to Lys-478 are disordered.

Belongs to the UFL1 family.

Its function is as follows. E3 UFM1-protein ligase that mediates ufmylation of target proteins. The protein is E3 UFM1-protein ligase 1 homolog of Drosophila melanogaster (Fruit fly).